The following is a 289-amino-acid chain: Tachykinins (289 aa).

Residues 1–24 (MRPLSGLIALALLLLLLLTAPSSA) form the signal peptide. The tract at residues 24–94 (AADTETESSG…DEEADSSYAE (71 aa)) is disordered. A propeptide spanning residues 25–47 (ADTETESSGSPLTPGAEEPRRVV) is cleaved from the precursor. Position 59 is an arginine amide (Arg59). The span at 60–69 (GKKDEEHDTS) shows a compositional bias: basic and acidic residues. At Asn95 the chain carries Asparagine amide. Position 110 is an arginine amide (Arg110). Valine amide is present on Val153. An arginine amide mark is found at Arg165, Arg200, Arg239, and Arg281. Positions 285-289 (PALFE) are excised as a propeptide.

This sequence belongs to the tachykinin family. In terms of tissue distribution, strong expression is seen in a group of 14 cells plus one isolated cell in the midgut of stage 17 embryos. Also expressed in a pair of medially located unidentified cells, just posterior to the brain, and in two lateral groups of cells that may be associated with tracheae. Expression in the larval gut is restricted to cells with endocrine cell-like morphology in the posterior midgut, just anterior to the malphigian tubules. In the brain, expression is detected in a restricted number of neuronal cell bodies. Expression in the adult female gut is restricted to the midgut with no expression detected in the hindgut.

The protein resides in the secreted. In terms of biological role, tachykinins are active peptides which excite neurons, evoke behavioral responses, are potent vasodilators and secretagogues, and contract (directly or indirectly) many smooth muscles. Stimulates gut muscle contractions. Required for the response to the male sex pheromone CH503 which is transferred from males to females during mating and inhibits courtship behavior by other males. The Gr68a gustatory receptor is required for detection of the pheromone and Gr68a-expressing neurons in the male foreleg relay signals to the suboesophageal zone (SEZ) which leads to courtship suppression through release of tachykinin from a cluster of 8-10 neurons in the SEZ. In Drosophila melanogaster (Fruit fly), this protein is Tachykinins.